The primary structure comprises 351 residues: MTKKLLVMAGGTGGHVFPAIAVVRELQQQGWEIRWLGTKDRMEADLVPKHGIPIEFIQISGLKGKGIKALLTAPFAILRAVLQAKKIINAYKPDAVLGMGGYVSGPGGIAAKLCGVPVILHEQNAVVGLTNVWLSKIARRTLQAFPTAFPNAEVVGNPVRQDLFEIAPPEQRFAEKGYPINILVMGGSQGALVINKTVLEVAKVLGQNVFISHQVGKGKLAGVEEVYQATGNGIASEFIDDMKAAYEWADLVICRSGALTVCEIAAAGLPAIFVPFQHKDRQQFLNAEYLAQVGAAMIIEQQDFTPESLLKALEPLIADRQKLTEMAIKARAKATPLAAKRVAEVIVENSL.

UDP-N-acetyl-alpha-D-glucosamine-binding positions include 12-14, Asn-124, Arg-160, Ser-188, Ile-239, 258-263, and Gln-283; these read TGG and ALTVCE.

The protein belongs to the glycosyltransferase 28 family. MurG subfamily.

The protein resides in the cell inner membrane. The enzyme catalyses di-trans,octa-cis-undecaprenyl diphospho-N-acetyl-alpha-D-muramoyl-L-alanyl-D-glutamyl-meso-2,6-diaminopimeloyl-D-alanyl-D-alanine + UDP-N-acetyl-alpha-D-glucosamine = di-trans,octa-cis-undecaprenyl diphospho-[N-acetyl-alpha-D-glucosaminyl-(1-&gt;4)]-N-acetyl-alpha-D-muramoyl-L-alanyl-D-glutamyl-meso-2,6-diaminopimeloyl-D-alanyl-D-alanine + UDP + H(+). Its pathway is cell wall biogenesis; peptidoglycan biosynthesis. Cell wall formation. Catalyzes the transfer of a GlcNAc subunit on undecaprenyl-pyrophosphoryl-MurNAc-pentapeptide (lipid intermediate I) to form undecaprenyl-pyrophosphoryl-MurNAc-(pentapeptide)GlcNAc (lipid intermediate II). The chain is UDP-N-acetylglucosamine--N-acetylmuramyl-(pentapeptide) pyrophosphoryl-undecaprenol N-acetylglucosamine transferase from Glaesserella parasuis serovar 5 (strain SH0165) (Haemophilus parasuis).